The primary structure comprises 150 residues: Large ribosomal subunit protein bL9 (150 aa).

It belongs to the bacterial ribosomal protein bL9 family.

Its function is as follows. Binds to the 23S rRNA. This Mycoplasmopsis pulmonis (strain UAB CTIP) (Mycoplasma pulmonis) protein is Large ribosomal subunit protein bL9.